The primary structure comprises 145 residues: Probable thioredoxin-2 (145 aa).

One can recognise a Thioredoxin domain in the interval 39–144; it reads VFDIDSVEDF…LDDFIEDVLA (106 aa). Catalysis depends on nucleophile residues cysteine 68 and cysteine 71. A disulfide bridge links cysteine 68 with cysteine 71.

It belongs to the thioredoxin family.

In terms of biological role, participates in various redox reactions through the reversible oxidation of its active center dithiol to a disulfide and catalyzes dithiol-disulfide exchange reactions. The polypeptide is Probable thioredoxin-2 (trx-2) (Caenorhabditis elegans).